The following is a 666-amino-acid chain: Probable potassium transport system protein Kup (666 aa).

12 helical membrane passes run 16-36 (GFIIALGIVYGDIGTSPLYTM), 58-78 (ISLIIWTLTLITTIKYVLIAL), 100-120 (PWLIIPAMIGGATLLSDGALT), 141-161 (IYQNQTNVIITTLVILIVLFG), 165-185 (FGTGFIGKIFGPVMFIWFSFL), 221-241 (IFILGSIFLATTGAEALYSDL), 253-273 (WPFVKVCIVLSYCGQAAWILA), 294-314 (VYLVSLATLAAIIASQALISG), 343-363 (LYIPVINWILFAVTSCTVLYF), 373-393 (YGLAITITMLMTTILLNYYLI), 399-419 (PFLAHLVMTFFALVEFIFFWA), and 424-444 (FMHGGYVVVILALAIVFVMFI).

The protein belongs to the HAK/KUP transporter (TC 2.A.72) family.

The protein localises to the cell membrane. It catalyses the reaction K(+)(in) + H(+)(in) = K(+)(out) + H(+)(out). Its function is as follows. Transport of potassium into the cell. Likely operates as a K(+):H(+) symporter. This chain is Probable potassium transport system protein Kup, found in Streptococcus pyogenes serotype M6 (strain ATCC BAA-946 / MGAS10394).